We begin with the raw amino-acid sequence, 94 residues long: Small ribosomal subunit protein bS18 (94 aa).

Residues 1-12 are compositionally biased toward low complexity; the sequence is MSEQNSRPQNSE. The segment at 1–29 is disordered; sequence MSEQNSRPQNSERPQRSRRPQGGPRRRRK. The segment covering 16–29 has biased composition (basic residues); the sequence is RSRRPQGGPRRRRK.

It belongs to the bacterial ribosomal protein bS18 family. As to quaternary structure, part of the 30S ribosomal subunit. Forms a tight heterodimer with protein bS6.

Functionally, binds as a heterodimer with protein bS6 to the central domain of the 16S rRNA, where it helps stabilize the platform of the 30S subunit. The polypeptide is Small ribosomal subunit protein bS18 (Leuconostoc mesenteroides subsp. mesenteroides (strain ATCC 8293 / DSM 20343 / BCRC 11652 / CCM 1803 / JCM 6124 / NCDO 523 / NBRC 100496 / NCIMB 8023 / NCTC 12954 / NRRL B-1118 / 37Y)).